The sequence spans 461 residues: Putative long chain fatty acid-CoA ligase VraA (461 aa).

It belongs to the ATP-dependent AMP-binding enzyme family.

This is Putative long chain fatty acid-CoA ligase VraA (vraA) from Staphylococcus haemolyticus (strain JCSC1435).